The following is a 298-amino-acid chain: Heat stress transcription factor C-2a (298 aa).

Residues 105-128 (SSGGGGAKRKEEAGGCGGGGEAAA) are disordered. Positions 145-181 (LRREQREIEGRVAAMWRRVQETERRPKQMLAFLVKVV) are hydrophobic repeat HR-A/B. Positions 213 to 216 (KRPR) match the Nuclear localization signal motif.

The protein belongs to the HSF family. Class C subfamily. Homotrimer. Exhibits temperature-dependent phosphorylation.

The protein resides in the nucleus. Functionally, transcriptional regulator that specifically binds DNA of heat shock promoter elements (HSE). This Oryza sativa subsp. japonica (Rice) protein is Heat stress transcription factor C-2a (HSFC2A).